A 310-amino-acid polypeptide reads, in one-letter code: Flavin-dependent trigonelline monooxygenase, reductase component (310 aa).

Residues 40–43 (TANS), 57–63 (SIAKTSS), 90–91 (FA), and Arg97 contribute to the FMN site.

Belongs to the non-flavoprotein flavin reductase family. Homodimer. The trigonelline monooxygenase is composed of a reductase component TgnA and an oxygenase component TgnB.

The enzyme catalyses a reduced flavin + NAD(+) = an oxidized flavin + NADH + 2 H(+). It catalyses the reaction FADH2 + NAD(+) = FAD + NADH + 2 H(+). It carries out the reaction FMNH2 + NAD(+) = FMN + NADH + 2 H(+). Maximal reductase activity is achieved only upon trigonelline (TG) binding to the reductase component before interaction with NADH. It seems that TgnA undergoes an allosteric transition upon trigonelline (TG) binding accounting for the positive cooperativity toward NADH oxidation. Involved in the degradation of the pyridine ring of trigonelline (TG; N-methylnicotinate) into succinate and methylamine as carbon and nitrogen sources, respectively. TgnA catalyzes the reduction of flavin (FMN or FAD) by NADH and supplies the reduced flavin to the oxygenase component TgnB. The protein is Flavin-dependent trigonelline monooxygenase, reductase component of Acinetobacter baylyi (strain ATCC 33305 / BD413 / ADP1).